The chain runs to 609 residues: Probable translation initiation factor IF-2 (609 aa).

The tr-type G domain maps to 12–230; the sequence is LRQPIVAVLG…VLAGLAQRYM (219 aa). The segment at 21 to 28 is G1; the sequence is GHVDHGKT. 21 to 28 lines the GTP pocket; that stretch reads GHVDHGKT. The segment at 46–50 is G2; the sequence is QITQH. Residues 86 to 89 form a G3 region; that stretch reads DTPG. GTP-binding positions include 86–90 and 140–143; these read DTPGH and NKID. The tract at residues 140-143 is G4; sequence NKID. A G5 region spans residues 208 to 210; sequence SAK.

The protein belongs to the TRAFAC class translation factor GTPase superfamily. Classic translation factor GTPase family. IF-2 subfamily.

Function in general translation initiation by promoting the binding of the formylmethionine-tRNA to ribosomes. Seems to function along with eIF-2. The chain is Probable translation initiation factor IF-2 from Ignicoccus hospitalis (strain KIN4/I / DSM 18386 / JCM 14125).